A 283-amino-acid chain; its full sequence is Nucleotide-binding protein ABBFA_002973 (283 aa).

Position 9 to 16 (9 to 16) interacts with ATP; that stretch reads GQSGSGKS. Residue 59-62 coordinates GTP; it reads DVRS.

Belongs to the RapZ-like family.

Its function is as follows. Displays ATPase and GTPase activities. The protein is Nucleotide-binding protein ABBFA_002973 of Acinetobacter baumannii (strain AB307-0294).